Reading from the N-terminus, the 431-residue chain is Glutamate-1-semialdehyde 2,1-aminomutase (431 aa).

Residue Lys-269 is modified to N6-(pyridoxal phosphate)lysine.

This sequence belongs to the class-III pyridoxal-phosphate-dependent aminotransferase family. HemL subfamily. Homodimer. Requires pyridoxal 5'-phosphate as cofactor.

It is found in the cytoplasm. The enzyme catalyses (S)-4-amino-5-oxopentanoate = 5-aminolevulinate. It participates in porphyrin-containing compound metabolism; protoporphyrin-IX biosynthesis; 5-aminolevulinate from L-glutamyl-tRNA(Glu): step 2/2. The protein operates within porphyrin-containing compound metabolism; chlorophyll biosynthesis. This chain is Glutamate-1-semialdehyde 2,1-aminomutase, found in Chlorobium chlorochromatii (strain CaD3).